The chain runs to 241 residues: tRNA pseudouridine synthase A (241 aa).

The active-site Nucleophile is aspartate 51. Position 110 (tyrosine 110) interacts with substrate.

The protein belongs to the tRNA pseudouridine synthase TruA family. Homodimer.

It carries out the reaction uridine(38/39/40) in tRNA = pseudouridine(38/39/40) in tRNA. In terms of biological role, formation of pseudouridine at positions 38, 39 and 40 in the anticodon stem and loop of transfer RNAs. The protein is tRNA pseudouridine synthase A of Campylobacter jejuni subsp. jejuni serotype O:23/36 (strain 81-176).